A 211-amino-acid chain; its full sequence is Troponin I, cardiac muscle (211 aa).

The disordered stretch occupies residues 1-24 (MADESSDAAGEPQPAPAPVRRRSS). A2 carries the post-translational modification N-acetylalanine. Phosphoserine is present on residues S5 and S6. 2 positions are modified to phosphoserine; by PKA and PKD/PRKD1: S23 and S24. Y27 carries the post-translational modification Phosphotyrosine. T32 is subject to Phosphothreonine; by STK4/MST1. Residues 33 to 80 (EPHAKKKSKISASRKLQLKTLMLQIAKQEMEREAEERRGEKGRVLRTR) form an involved in binding TNC region. Residues S43 and S45 each carry the phosphoserine; by PKC/PRKCE modification. T52 carries the post-translational modification Phosphothreonine; by STK4/MST1. T79 is subject to Phosphothreonine. A phosphothreonine; by STK4/MST1 mark is found at T130 and T144. The tract at residues 130-151 (TQKIYDLRGKFKRPTLRRVRIS) is involved in binding TNC and actin. Phosphoserine occurs at positions 151, 167, and 200.

The protein belongs to the troponin I family. In terms of assembly, interacts with TRIM63. Binds to actin and tropomyosin. Interacts with STK4/MST1. Phosphorylated at Ser-23 and Ser-24 by PRKD1; phosphorylation reduces myofilament calcium sensitivity. Phosphorylated preferentially at Thr-32. Phosphorylation by STK4/MST1 alters its binding affinity to TNNC1 (cardiac Tn-C) and TNNT2 (cardiac Tn-T). Phosphorylated at Ser-43 and Ser-45 by PRKCE; phosphorylation increases myocardium contractile dysfunction.

Its function is as follows. Troponin I is the inhibitory subunit of troponin, the thin filament regulatory complex which confers calcium-sensitivity to striated muscle actomyosin ATPase activity. The protein is Troponin I, cardiac muscle (Tnni3) of Mus musculus (Mouse).